The primary structure comprises 409 residues: Elongation factor Tu (409 aa).

Positions 10–214 (KPHANIGTIG…EVDAYIPTPE (205 aa)) constitute a tr-type G domain. The interval 19 to 26 (GHVDHGKT) is G1. 19–26 (GHVDHGKT) is a binding site for GTP. Residue T26 participates in Mg(2+) binding. The G2 stretch occupies residues 60–64 (GITIN). A G3 region spans residues 81-84 (DCPG). Residues 81 to 85 (DCPGH) and 136 to 139 (NKED) contribute to the GTP site. Residues 136–139 (NKED) form a G4 region. Positions 174 to 176 (SAL) are G5.

The protein belongs to the TRAFAC class translation factor GTPase superfamily. Classic translation factor GTPase family. EF-Tu/EF-1A subfamily. In terms of assembly, monomer.

It is found in the cytoplasm. The enzyme catalyses GTP + H2O = GDP + phosphate + H(+). GTP hydrolase that promotes the GTP-dependent binding of aminoacyl-tRNA to the A-site of ribosomes during protein biosynthesis. The sequence is that of Elongation factor Tu from Synechococcus elongatus (strain ATCC 33912 / PCC 7942 / FACHB-805) (Anacystis nidulans R2).